Consider the following 261-residue polypeptide: 5'-nucleotidase SurE (261 aa).

Residues Asp-8, Asp-9, Ser-43, and Asn-96 each coordinate a divalent metal cation.

This sequence belongs to the SurE nucleotidase family. A divalent metal cation serves as cofactor.

It localises to the cytoplasm. The catalysed reaction is a ribonucleoside 5'-phosphate + H2O = a ribonucleoside + phosphate. In terms of biological role, nucleotidase that shows phosphatase activity on nucleoside 5'-monophosphates. In Cereibacter sphaeroides (strain ATCC 17025 / ATH 2.4.3) (Rhodobacter sphaeroides), this protein is 5'-nucleotidase SurE.